The primary structure comprises 163 residues: uncharacterized protein (163 aa).

4Fe-4S ferredoxin-type domains lie at 30–59, 61–90, 105–136, and 136–163; these read REII…YSSD, LYIT…IIRL, KYEF…EYGS, and SKIR…IILR. Positions 39, 42, 45, 49, 70, 73, 76, 80, 116, 119, 122, 126, 145, 148, 151, and 155 each coordinate [4Fe-4S] cluster.

This is an uncharacterized protein from Methanocaldococcus jannaschii (strain ATCC 43067 / DSM 2661 / JAL-1 / JCM 10045 / NBRC 100440) (Methanococcus jannaschii).